The chain runs to 93 residues: Large ribosomal subunit protein uL23 (93 aa).

Belongs to the universal ribosomal protein uL23 family. In terms of assembly, part of the 50S ribosomal subunit. Contacts protein L29, and trigger factor when it is bound to the ribosome.

Its function is as follows. One of the early assembly proteins it binds 23S rRNA. One of the proteins that surrounds the polypeptide exit tunnel on the outside of the ribosome. Forms the main docking site for trigger factor binding to the ribosome. The sequence is that of Large ribosomal subunit protein uL23 from Wolinella succinogenes (strain ATCC 29543 / DSM 1740 / CCUG 13145 / JCM 31913 / LMG 7466 / NCTC 11488 / FDC 602W) (Vibrio succinogenes).